Here is a 186-residue protein sequence, read N- to C-terminus: Ribosome-recycling factor (186 aa).

The protein belongs to the RRF family.

Its subcellular location is the cytoplasm. In terms of biological role, responsible for the release of ribosomes from messenger RNA at the termination of protein biosynthesis. May increase the efficiency of translation by recycling ribosomes from one round of translation to another. This Bacteroides fragilis (strain ATCC 25285 / DSM 2151 / CCUG 4856 / JCM 11019 / LMG 10263 / NCTC 9343 / Onslow / VPI 2553 / EN-2) protein is Ribosome-recycling factor.